Consider the following 268-residue polypeptide: MNGIYALQQTFVKFSLLALYHRLFWVNRHFVRSVWLVGIVQGCWGIAILLVHIFLCTPMEKIWTPWMVEGTCVDVNTLFAIYEALNSVLDFIVAGLAIWMLPSLQIRKSTRWHLAGLFVLGAFSGFIGIIKIVEAYDSAQRNFQAVIWNVVQMSISIICCCAPIYRSILPKMGMSSIPSWASWSLRGSSRRSKAVASTADGTSKFSMRSYQGEGKAGGTSVSGNWINLDGSSQRALAWVDAESHGKDQSTYQDIPMGRMKVERSVEVI.

4 helical membrane-spanning segments follow: residues 34-54 (VWLV…VHIF), 78-98 (LFAI…GLAI), 113-133 (HLAG…IKIV), and 145-165 (AVIW…APIY).

The protein belongs to the SAT4 family.

The protein localises to the membrane. It participates in mycotoxin biosynthesis. Its function is as follows. Part of the satratoxin SC1 cluster involved in the biosynthesis of satratoxins, trichothecene mycotoxins that are associated with human food poisonings. Satratoxins are suggested to be made by products of multiple gene clusters (SC1, SC2 and SC3) that encode 21 proteins in all, including polyketide synthases, acetyltransferases, and other enzymes expected to modify the trichothecene skeleton. SC1 encodes 10 proteins, SAT1 to SAT10. The largest are SAT8, which encodes a putative polyketide synthase (PKS) with a conventional non-reducing architecture, and SAT10, a putative protein containing four ankyrin repeats and thus may be involved in protein scaffolding. The putative short-chain reductase SAT3 may assist the PKS in some capacity. SAT6 contains a secretory lipase domain and acts probably as a trichothecene esterase. SAT5 encodes a putative acetyltransferase, and so, with SAT6, may affect endogenous protection from toxicity. The probable transcription factor SAT9 may regulate the expression of the SC1 cluster. SC2 encodes proteins SAT11 to SAT16, the largest of which encodes the putative reducing PKS SAT13. SAT11 is a cytochrome P450 monooxygenase, while SAT14 and SAT16 are probable acetyltransferases. The SC2 cluster may be regulated by the transcription factor SAT15. SC3 is a small cluster that encodes 5 proteins, SAT17 to SAT21. SAT21 is a putative MFS-type transporter which may have a role in exporting secondary metabolites. The four other proteins putatively encoded in SC3 include the taurine hydroxylase-like protein SAT17, the O-methyltransferase SAT18, the acetyltransferase SAT19, and the Cys6-type zinc finger SAT20, the latter being probably involved in regulation of SC3 expression. The protein is Satratoxin biosynthesis SC1 cluster protein 4 of Stachybotrys chartarum (strain CBS 109288 / IBT 7711) (Toxic black mold).